Reading from the N-terminus, the 1404-residue chain is DNA-directed RNA polymerase subunit beta' (1404 aa).

Zn(2+) is bound by residues cysteine 70, cysteine 72, cysteine 85, and cysteine 88. 3 residues coordinate Mg(2+): aspartate 460, aspartate 462, and aspartate 464. Residues cysteine 825, cysteine 899, cysteine 906, and cysteine 909 each coordinate Zn(2+).

This sequence belongs to the RNA polymerase beta' chain family. In terms of assembly, the RNAP catalytic core consists of 2 alpha, 1 beta, 1 beta' and 1 omega subunit. When a sigma factor is associated with the core the holoenzyme is formed, which can initiate transcription. Mg(2+) serves as cofactor. Zn(2+) is required as a cofactor.

It carries out the reaction RNA(n) + a ribonucleoside 5'-triphosphate = RNA(n+1) + diphosphate. In terms of biological role, DNA-dependent RNA polymerase catalyzes the transcription of DNA into RNA using the four ribonucleoside triphosphates as substrates. The sequence is that of DNA-directed RNA polymerase subunit beta' from Nitrosomonas eutropha (strain DSM 101675 / C91 / Nm57).